We begin with the raw amino-acid sequence, 365 residues long: tRNA N6-adenosine threonylcarbamoyltransferase (365 aa).

Positions 122 and 126 each coordinate Fe cation. Substrate is bound by residues 147 to 151 (LVSGG), Asp-180, Gly-193, and Asn-293. Asp-321 is a binding site for Fe cation. A disordered region spans residues 340 to 365 (PNEIDTAARPRWPLSERTPATPEHVS).

This sequence belongs to the KAE1 / TsaD family. Fe(2+) is required as a cofactor.

It is found in the cytoplasm. It carries out the reaction L-threonylcarbamoyladenylate + adenosine(37) in tRNA = N(6)-L-threonylcarbamoyladenosine(37) in tRNA + AMP + H(+). Its function is as follows. Required for the formation of a threonylcarbamoyl group on adenosine at position 37 (t(6)A37) in tRNAs that read codons beginning with adenine. Is involved in the transfer of the threonylcarbamoyl moiety of threonylcarbamoyl-AMP (TC-AMP) to the N6 group of A37, together with TsaE and TsaB. TsaD likely plays a direct catalytic role in this reaction. The sequence is that of tRNA N6-adenosine threonylcarbamoyltransferase from Gluconobacter oxydans (strain 621H) (Gluconobacter suboxydans).